The primary structure comprises 104 residues: Large ribosomal subunit protein uL24 (104 aa).

Belongs to the universal ribosomal protein uL24 family. In terms of assembly, part of the 50S ribosomal subunit.

Functionally, one of two assembly initiator proteins, it binds directly to the 5'-end of the 23S rRNA, where it nucleates assembly of the 50S subunit. Its function is as follows. One of the proteins that surrounds the polypeptide exit tunnel on the outside of the subunit. This chain is Large ribosomal subunit protein uL24, found in Saccharopolyspora erythraea (strain ATCC 11635 / DSM 40517 / JCM 4748 / NBRC 13426 / NCIMB 8594 / NRRL 2338).